The sequence spans 1375 residues: DNA-directed RNA polymerase subunit beta (1375 aa).

It belongs to the RNA polymerase beta chain family. The RNAP catalytic core consists of 2 alpha, 1 beta, 1 beta' and 1 omega subunit. When a sigma factor is associated with the core the holoenzyme is formed, which can initiate transcription.

It carries out the reaction RNA(n) + a ribonucleoside 5'-triphosphate = RNA(n+1) + diphosphate. In terms of biological role, DNA-dependent RNA polymerase catalyzes the transcription of DNA into RNA using the four ribonucleoside triphosphates as substrates. This Campylobacter jejuni subsp. jejuni serotype O:6 (strain 81116 / NCTC 11828) protein is DNA-directed RNA polymerase subunit beta.